The following is a 1083-amino-acid chain: MEQQQQQQQQQKSVAHISKLFVCTAVDCKDEIEEKFERSYVSLQQQIAGLSDKEMHDILTQFVCKEKQHEEISIGFLYIILTDPAMAPKTYRDITLVSRDGMNVIVANLTLLVAEKYAKLTETARRQLIWVLREFVKHQVLSVENVIWNCLRQAGGGDVSHKNLYLVESLLDIFIEYRAWLETNPFLVQSSVYSFVRLIEDHANPALISLRQKEVKFTISLIRDRFHDIIPLGRDFVRLLQNVARIPEFELLWRDILYNPKSLHPTFNGIWHLLQIRTSRRFLQCRLLPEMERKLHFLASSVKFGNQKRYQDWFQDKYFATPESHSLRSDLIRFIINVIHPTNDMLCSDIIPRWAIIGWLISSCTNPIASANAKLSLFYDWLFFDPAKDNIMNIEPGILVMYHSIRNHPFVSSTLLDFLCRITKNFYVKNEDRIRLGVYNSLKLILDKQVIPNLHPLFESPKLDRELRNLIRENFREFVTPVANMPQSMYPATHTIQAPIFKKEADQRLMQGEIMDAGGGGAFVASSGTNMLVDDDNKIAIAPLESMERENEAVFSDDENLPSTSKNEENTDDDDDLPLSKVRLKEKPVPEKVELPDAIAESFEIFVTKRNSFTWEAFLKDFRTLPASALDETQLNYVISNTVLILRETLPQQNVFSESKTEEKYLAKSISYPLYGLFRFLYENEDKSKKPFQTLLSEICGRLTETGYLLLYFMKIHCKLQTRKNAQQSYQFKTTVYRQICEATDEKIGVCLVRDLDLLEKENTTIYLWLLPDIYREFKTIAINNTELLRITLRCIDAKNVRDIMYSIAQGKLTIFKQDGLLDCIRDSLEYETYEQFCLWQLIQAHDVPLKCIQDLLPELEAANHPEALSHLLLLLKNEEPTNEIIRLLLSREAKSRGDPFVTSALRFWCQRCEEKLSEIIASLLTSKYPSSSPNKRKRPSKGSSAASSTPSADHVLNHLEHYRRSCRHGTGTGLYVHDMMQRALQSAYSHSNESTKKQFSDLFALAAEDETTAVGRRGGSGRGRKQPVGKKDSSNHSASSKKNSDVVKTIYSSDENSSEEDWSKHKVTQPAKKRKKAINDSD.

Disordered stretches follow at residues 551 to 579 (NEAVFSDDENLPSTSKNEENTDDDDDLPL), 929 to 953 (YPSSSPNKRKRPSKGSSAASSTPSA), and 1014 to 1083 (AVGR…NDSD). Residues 942-953 (KGSSAASSTPSA) show a composition bias toward low complexity. Phosphoserine occurs at positions 1053, 1054, 1058, and 1059. Over residues 1066 to 1077 (HKVTQPAKKRKK) the composition is skewed to basic residues.

The protein belongs to the Integrator subunit 3 family. In terms of assembly, belongs to the multiprotein complex Integrator, at least composed of IntS1, IntS2, IntS3, IntS4, omd/IntS5, IntS6, defl/IntS7, IntS8, IntS9, IntS10, IntS11, IntS12, asun/IntS13, IntS14 and IntS15. The core complex associates with protein phosphatase 2A subunits mts/PP2A and Pp2A-29B, to form the Integrator-PP2A (INTAC) complex.

It is found in the nucleus. Its subcellular location is the cytoplasm. Functionally, component of the integrator complex, a multiprotein complex that terminates RNA polymerase II (Pol II) transcription in the promoter-proximal region of genes. The integrator complex provides a quality checkpoint during transcription elongation by driving premature transcription termination of transcripts that are unfavorably configured for transcriptional elongation: the complex terminates transcription by (1) catalyzing dephosphorylation of the C-terminal domain (CTD) of Pol II subunit Polr2A/Rbp1 and Spt5, and (2) degrading the exiting nascent RNA transcript via endonuclease activity. The integrator complex is also involved in the 3'-end processing of the U7 snRNA, and also the spliceosomal snRNAs U1, U2, U4 and U5. The protein is Integrator complex subunit 3 homolog (IntS3) of Drosophila grimshawi (Hawaiian fruit fly).